A 303-amino-acid polypeptide reads, in one-letter code: Acetylglutamate kinase (303 aa).

Residues 67–68 (GG), R89, and N193 contribute to the substrate site.

It belongs to the acetylglutamate kinase family. ArgB subfamily.

The protein resides in the cytoplasm. It carries out the reaction N-acetyl-L-glutamate + ATP = N-acetyl-L-glutamyl 5-phosphate + ADP. Its pathway is amino-acid biosynthesis; L-arginine biosynthesis; N(2)-acetyl-L-ornithine from L-glutamate: step 2/4. Its function is as follows. Catalyzes the ATP-dependent phosphorylation of N-acetyl-L-glutamate. This chain is Acetylglutamate kinase, found in Acinetobacter baylyi (strain ATCC 33305 / BD413 / ADP1).